The sequence spans 979 residues: Chromosome partition protein Smc (979 aa).

33 to 40 (PNGSGKSN) provides a ligand contact to ATP. Positions 169–400 (SKYKLDKEEA…INILKQQFEN (232 aa)) form a coiled coil. The region spanning 419–538 (DGYIGLASEL…DNVDNANRIA (120 aa)) is the SMC hinge domain. Coiled-coil stretches lie at residues 572–716 (ILNY…HSDS) and 750–818 (SLDL…DKII).

This sequence belongs to the SMC family. In terms of assembly, homodimer.

It localises to the cytoplasm. Its function is as follows. Required for chromosome condensation and partitioning. This Mesomycoplasma hyorhinis (Mycoplasma hyorhinis) protein is Chromosome partition protein Smc.